The sequence spans 189 residues: Elongation factor P (189 aa).

This sequence belongs to the elongation factor P family.

The protein localises to the cytoplasm. Its pathway is protein biosynthesis; polypeptide chain elongation. Its function is as follows. Involved in peptide bond synthesis. Stimulates efficient translation and peptide-bond synthesis on native or reconstituted 70S ribosomes in vitro. Probably functions indirectly by altering the affinity of the ribosome for aminoacyl-tRNA, thus increasing their reactivity as acceptors for peptidyl transferase. The polypeptide is Elongation factor P (Onion yellows phytoplasma (strain OY-M)).